Here is a 238-residue protein sequence, read N- to C-terminus: Heme oxygenase 1 (238 aa).

The protein belongs to the heme oxygenase family.

It catalyses the reaction heme b + 3 reduced [NADPH--hemoprotein reductase] + 3 O2 = biliverdin IXalpha + CO + Fe(2+) + 3 oxidized [NADPH--hemoprotein reductase] + 3 H2O + H(+). Functionally, catalyzes the opening of the heme ring with the release of iron. Key enzyme in the synthesis of the chromophoric part of the photosynthetic antennae. Upon overexpression in E.coli with PCB:ferredoxin oxidoreductase, CpeS and either CpcB or PecB permits synthesis of phycocyanin-coupled CpcB or PecB. The sequence is that of Heme oxygenase 1 (pbsA1) from Nostoc sp. (strain PCC 7120 / SAG 25.82 / UTEX 2576).